Reading from the N-terminus, the 548-residue chain is MRVNYIFVTGGVVSSLGKGIATASLAAVLEARGLSVTIIKLDPYINMDPGTISPVQHGEVFITEDGAETDLDLGHYERFIRTKMRHHNNFTAGKIYADVLRKERRGDYLGATIQIIPHVTDTIKKWLIAGAFGHDVLLVEIGGTVGDIESLPFLEAIRQMVMEVNREQTLYIHLTLVPFIAVSGELKTKPTQHSVKELLSIGIQPDILICRSDRVISNSERKKISLFCNVPKQAIIALQDVDSIYKIPALLKDQGLDNYICKRFNLNCPEANLSDWEEVIYYQEHPIGEVTVGMVGKYIELVDAYKSVTEALKHAGIKNRFIVNIRLINSQDVEKLGIEKTLKGLDAILVPGGFGYRGVEGKILSAQYARENNIPYFGICLGMQVALIEFARHVAGMPEANSTEFVTNCKCPVIALITECKDENGIFITHNDNTNLGGTMRLGNQACYLIKGSLTHQIYGKSTILERHRHRYEVNNMLLKHITHAGLSCVGFSKKNNLVEVIEYPNHPWFIGSQFHPEFNSTPREGHPLFIGFIKAAIEYQHRHNKLI.

Residues 1-266 (MRVNYIFVTG…DNYICKRFNL (266 aa)) are amidoligase domain. Ser14 contacts CTP. A UTP-binding site is contributed by Ser14. Residues 15–20 (SLGKGI) and Asp72 each bind ATP. Asp72 and Glu140 together coordinate Mg(2+). Residues 147-149 (DIE), 187-192 (KTKPTQ), and Lys223 contribute to the CTP site. Residues 187 to 192 (KTKPTQ) and Lys223 contribute to the UTP site. Positions 291 to 543 (TVGMVGKYIE…IKAAIEYQHR (253 aa)) constitute a Glutamine amidotransferase type-1 domain. Gly353 is a binding site for L-glutamine. The Nucleophile; for glutamine hydrolysis role is filled by Cys380. Residues 381 to 384 (LGMQ), Glu404, and Arg471 contribute to the L-glutamine site. Active-site residues include His516 and Glu518.

The protein belongs to the CTP synthase family. Homotetramer.

The enzyme catalyses UTP + L-glutamine + ATP + H2O = CTP + L-glutamate + ADP + phosphate + 2 H(+). It carries out the reaction L-glutamine + H2O = L-glutamate + NH4(+). The catalysed reaction is UTP + NH4(+) + ATP = CTP + ADP + phosphate + 2 H(+). Its pathway is pyrimidine metabolism; CTP biosynthesis via de novo pathway; CTP from UDP: step 2/2. Its activity is regulated as follows. Allosterically activated by GTP, when glutamine is the substrate; GTP has no effect on the reaction when ammonia is the substrate. The allosteric effector GTP functions by stabilizing the protein conformation that binds the tetrahedral intermediate(s) formed during glutamine hydrolysis. Inhibited by the product CTP, via allosteric rather than competitive inhibition. Functionally, catalyzes the ATP-dependent amination of UTP to CTP with either L-glutamine or ammonia as the source of nitrogen. Regulates intracellular CTP levels through interactions with the four ribonucleotide triphosphates. The protein is CTP synthase of Blochmanniella pennsylvanica (strain BPEN).